The following is a 645-amino-acid chain: Crossover junction endonuclease mus-81 (645 aa).

2 disordered regions span residues 98–119 (LAAAGAVQDEQPPPPKRARTAR) and 219–310 (GVAG…EDRK). The segment covering 223-252 (SANTSRNAIASGSGTSNPNRSENVNPNRQD) has biased composition (polar residues). The segment covering 296 to 305 (DSDDEDPKYD) has biased composition (acidic residues). The region spanning 353–459 (ELVLDTREVQ…NVVYIIENYN (107 aa)) is the ERCC4 domain.

Belongs to the XPF family. In terms of assembly, interacts with eme-1. Mg(2+) is required as a cofactor.

The protein resides in the nucleus. In terms of biological role, interacts with eme-1 to form a DNA structure-specific endonuclease with substrate preference for branched DNA structures with a 5'-end at the branch nick. Typical substrates include 3'-flap structures, D-loops, replication forks and nicked Holliday junctions. May be required in mitosis for the processing of stalled or collapsed replication fork intermediates. May be required in meiosis for the repair of meiosis-specific double strand breaks subsequent to single-end invasion (SEI). The polypeptide is Crossover junction endonuclease mus-81 (mus-81) (Neurospora crassa (strain ATCC 24698 / 74-OR23-1A / CBS 708.71 / DSM 1257 / FGSC 987)).